The primary structure comprises 369 residues: 3,7-dimethylxanthine N-methyltransferase TCS1 (369 aa).

Tyr-24 serves as a coordination point for S-adenosyl-L-homocysteine. Thr-31 contacts caffeine. The S-adenosyl-L-homocysteine site is built by Cys-66, Asn-71, Asp-103, Leu-104, Ser-138, and Phe-139. Caffeine is bound by residues Tyr-156, His-159, and Trp-160. Asn-177 is a Mg(2+) binding site. Arg-225 serves as a coordination point for caffeine. Mg(2+) contacts are provided by Asp-263, Phe-265, and Asn-266. Phe-321 provides a ligand contact to caffeine.

This sequence belongs to the methyltransferase superfamily. Type-7 methyltransferase family. Mg(2+) serves as cofactor. Expressed in young leaves and flowers.

The catalysed reaction is 7-methylxanthine + S-adenosyl-L-methionine = theobromine + S-adenosyl-L-homocysteine + H(+). It catalyses the reaction theobromine + S-adenosyl-L-methionine = caffeine + S-adenosyl-L-homocysteine + H(+). The enzyme catalyses 1,7-dimethylxanthine + S-adenosyl-L-methionine = caffeine + S-adenosyl-L-homocysteine + H(+). Its pathway is alkaloid biosynthesis. Involved in the biosynthesis of caffeine. Catalyzes the conversion of 7-methylxanthine (7mX) to theobromine and of theobromine to caffeine. Has 3-N- and 1-N-methylation activity. This is 3,7-dimethylxanthine N-methyltransferase TCS1 from Camellia sinensis (Tea plant).